The chain runs to 89 residues: Small membrane A-kinase anchor protein (89 aa).

The disordered stretch occupies residues 1–29 (MGCMKSKRRDPTQNSDSSEKVDGKPGKHG). A lipid anchor (N-myristoyl glycine) is attached at Gly-2. The segment covering 17–29 (SSEKVDGKPGKHG) has biased composition (basic and acidic residues).

It belongs to the small membrane AKAP family. May be palmitoylated at Cys-3.

The protein localises to the cell membrane. In terms of biological role, binds to type I regulatory subunits of protein kinase A and may anchor/target them to the plasma membrane. This chain is Small membrane A-kinase anchor protein, found in Danio rerio (Zebrafish).